The sequence spans 61 residues: Photosystem II reaction center protein K (61 aa).

Positions 1-24 are excised as a propeptide; the sequence is MLNIFSLICICLNSALYSSSLFFA. A helical transmembrane segment spans residues 40-60; the sequence is MPVIPLFFFLLAFVWQAAVSF.

Belongs to the PsbK family. In terms of assembly, PSII is composed of 1 copy each of membrane proteins PsbA, PsbB, PsbC, PsbD, PsbE, PsbF, PsbH, PsbI, PsbJ, PsbK, PsbL, PsbM, PsbT, PsbX, PsbY, PsbZ, Psb30/Ycf12, at least 3 peripheral proteins of the oxygen-evolving complex and a large number of cofactors. It forms dimeric complexes.

The protein localises to the plastid. It localises to the chloroplast thylakoid membrane. In terms of biological role, one of the components of the core complex of photosystem II (PSII). PSII is a light-driven water:plastoquinone oxidoreductase that uses light energy to abstract electrons from H(2)O, generating O(2) and a proton gradient subsequently used for ATP formation. It consists of a core antenna complex that captures photons, and an electron transfer chain that converts photonic excitation into a charge separation. This Panax ginseng (Korean ginseng) protein is Photosystem II reaction center protein K.